Consider the following 124-residue polypeptide: UPF0102 protein PP_1324 (124 aa).

This sequence belongs to the UPF0102 family.

This Pseudomonas putida (strain ATCC 47054 / DSM 6125 / CFBP 8728 / NCIMB 11950 / KT2440) protein is UPF0102 protein PP_1324.